A 2474-amino-acid polypeptide reads, in one-letter code: Serine/threonine-protein kinase TOR2 (2474 aa).

Residues 1–62 (MNKYINKYTT…NGPNDSGRVI (62 aa)) form a disordered region. Residue Thr-10 is modified to Phosphothreonine. Basic residues predominate over residues 25–36 (HRTRKKLTHKSH). Residues 43–56 (STTSNTDSNHNGPN) show a composition bias toward polar residues. HEAT repeat units lie at residues 588 to 626 (YSLT…KDDI), 636 to 674 (HSVS…PQLA), 676 to 710 (PDNL…VNPA), 756 to 793 (PYID…VGGK), 797 to 835 (RYLK…SSGY), 841 to 879 (LDYP…LDPY), 917 to 955 (YYPT…NLGL), 1039 to 1076 (RFVP…FGPN), 1079 to 1116 (DYSH…NINL), 1118 to 1155 (EMSS…QLGT), and 1292 to 1331 (SYQE…DDKP). One can recognise an FAT domain in the interval 1338 to 1922 (TLGKYAQKCH…VYPLMVAIKS (585 aa)). Residues 2097 to 2421 (FEPVFSVISS…EHKNAIRNAR (325 aa)) form the PI3K/PI4K catalytic domain. Residues 2103 to 2109 (VISSKQR) form a G-loop region. The tract at residues 2276–2284 (GLGDRHPSN) is catalytic loop. The segment at 2296-2321 (HIDFGDCFEAAILREKFPEKVPFRLT) is activation loop. The region spanning 2442–2474 (NDLDVPEQVDKLIQQATSVENLCQHYIGWCPFW) is the FATC domain.

Belongs to the PI3/PI4-kinase family. As to quaternary structure, the target of rapamycin complex 1 (TORC1) is composed of at least KOG1, LST8, TCO89 and either TOR1 (TORC1-A) or TOR2 (TORC1-B). TORC1 binds to and is inhibited by FKBP-rapamycin. Interacts with PIB2; following activation of PIB2 by glutamine. The target of rapamycin complex 2 (TORC2) is composed of at least AVO1, AVO2, BIT61, LST8, TOR2 and TSC11. TORC2 forms a homodimer. Contrary to TORC1, TORC2 does not bind to and is not sensitive to FKBP-rapamycin. Interacts with SLM1 and SLM2.

The protein localises to the cell membrane. It localises to the vacuole membrane. It catalyses the reaction L-seryl-[protein] + ATP = O-phospho-L-seryl-[protein] + ADP + H(+). It carries out the reaction L-threonyl-[protein] + ATP = O-phospho-L-threonyl-[protein] + ADP + H(+). The enzyme catalyses a 1,2-diacyl-sn-glycero-3-phospho-(1D-myo-inositol) + ATP = a 1,2-diacyl-sn-glycero-3-phospho-(1D-myo-inositol 4-phosphate) + ADP + H(+). Phosphatidylinositol 3-kinase homolog, component of both TORC1 and TORC2. TORC1 regulates multiple cellular processes to control cell growth in response to environmental signals. Nutrient limitation and environmental stress signals cause inactivation of TORC1. Active TORC1 positively controls ribosome biogenesis via control of rRNA, ribosomal protein and tRNA gene expression, and rRNA processing. TORC1 positively controls protein biosynthesis by regulation of mRNA stability, translation initiation factor activity, and high-affinity amino acid permeases that serve to provide amino acids for use by the translation machinery. TORC1 also promotes growth by sequestering a number of nutrient and general stress-responsive transcription factors in the cytoplasm. TORC1 negatively controls macroautophagy, a process to recycle surplus cytoplasmic mass under nutrient starvation conditions. TORC1 controls many of these processes via TIP41-TAP42-mediated inhibition of the type 2A-related phosphatases PP2A and SIT4. In nutrient-rich conditions, responsible for the phosphorylation of AGC S6 kinase (S6K) YPK3, activating YPK3 kinase activity and promoting phosphorylation of ribosomal protein S6. Phosphorylates kinase SCH9 at 6 amino acids in the C-terminus, activating SCH9 kinase activity to properly regulate ribosome biogenesis, translation initiation, and entry into stationary phase. TORC2 regulates cell cycle-dependent polarization of the actin-cytoskeleton, cell wall integrity, and receptor endocytosis. TORC2 controls polarity of the actin cytoskeleton, which is required for orienting the secretory pathway toward discrete growth sites, via the RHO1/PKC1/MAPK cell integrity pathway by activating the RHO1 guanine nucleotide exchange factor ROM2. TORC2 phosphorylates the AGC kinase YPK2, an upstream effector of the cell integrity pathway. TORC2 negatively regulates calcineurin-dependent stress signaling via phosphorylation of its effector SLM1-SLM2. The protein is Serine/threonine-protein kinase TOR2 (TOR2) of Saccharomyces cerevisiae (strain ATCC 204508 / S288c) (Baker's yeast).